The following is a 354-amino-acid chain: MVSGVTYLKRGAVFGSGAFGTALACVLAKKCESVSVWHMNANEARVVNQKHENVYFLPGAPLPANLTFTADAEECAKGAEIVLFVIPTQFLRGFLQKNSHILRNHVVSRNVPVVMCSKGIERSSLLFPAQILEEFLPNYPIGVIAGPSFAIEVAKGMLTNVCTAAADIDMARKIQRIMTTSDGSFRCWATTDVIGCEIASAMKNVLAIASGALKGLGTENNARAALISRGLLEIRDLTLALGGTGEAVFGLPGLGDLLLTCSSELSRNFTVGMKLGKGISLEEIKRTSKAVAEGVATAEPLERLAKKHNVHLPICHEVYNVLYANGCAKRSFKKLNSCKLADEGLPALPRTSKM.

Residues 15–20 (GSGAFG), Phe90, Lys118, and Ala150 each bind NAD(+). Lys118 provides a ligand contact to substrate. The active-site Proton acceptor is the Lys203. Residues Arg267 and Glu293 each coordinate NAD(+). Residue 267-268 (RN) coordinates substrate. A Microbody targeting signal motif is present at residues 352–354 (SKM).

This sequence belongs to the NAD-dependent glycerol-3-phosphate dehydrogenase family.

Its subcellular location is the glycosome. The catalysed reaction is sn-glycerol 3-phosphate + NAD(+) = dihydroxyacetone phosphate + NADH + H(+). This Trypanosoma brucei rhodesiense protein is Glycerol-3-phosphate dehydrogenase [NAD(+)], glycosomal (GPD).